The primary structure comprises 1216 residues: Histone-lysine N-methyltransferase SETDB1-B (1216 aa).

The stretch at 38–61 (KADLEQLQEWVEQREKEVADIDAL) forms a coiled coil. Tudor domains are found at residues 266-329 (RLFV…LKKT) and 356-412 (LLKP…NLKM). The interval 417 to 513 (SQEKKMAGQQ…QGMPSDLQPK (97 aa)) is disordered. The span at 467–478 (PVAPQPAGPPQP) shows a compositional bias: pro residues. Polar residues predominate over residues 482 to 498 (ESPSFKSQMAKKSTGQL). In terms of domain architecture, MBD spans 595–666 (HRGRNPLLTP…EMFCLDPYVL (72 aa)). The 74-residue stretch at 728–801 (VGCDCTDGCR…MCTNRLVQHG (74 aa)) folds into the Pre-SET domain. The Zn(2+) site is built by Cys-730, Cys-732, Cys-736, Cys-742, Cys-744, Cys-782, Cys-786, Cys-788, and Cys-793. One can recognise an SET domain in the interval 804-1179 (VRLQLFKTQN…AGTELTWDYN (376 aa)). S-adenosyl-L-methionine is bound by residues 814-816 (KGW), Asp-852, and Tyr-854. Disordered stretches follow at residues 892–944 (LPAS…DTFV), 961–1057 (RRQA…KTQA), and 1081–1108 (KSGGGGAGGGGSGPSHGHGGGGGDNGPK). Residues 918–940 (DSSEESDDEKDDDSNEDDSDSSD) show a composition bias toward acidic residues. Basic and acidic residues-rich tracts occupy residues 966-976 (GLKEESQDSKD) and 983-997 (GEDRKPPHMPEETGK). The segment covering 1003–1016 (WLTNQSSTSANQSV) has biased composition (polar residues). Basic and acidic residues-rich tracts occupy residues 1020–1029 (GGIKTEKKDV) and 1046–1055 (DDNKEREKKT). Residues 1082–1105 (SGGGGAGGGGSGPSHGHGGGGGDN) are compositionally biased toward gly residues. S-adenosyl-L-methionine-binding positions include Arg-1133 and 1136–1137 (NH). 4 residues coordinate Zn(2+): Cys-1139, Cys-1192, Cys-1194, and Cys-1199. Residues 1188 to 1204 (KELLCCCGSTECRGRLL) enclose the Post-SET domain.

It belongs to the class V-like SAM-binding methyltransferase superfamily. Histone-lysine methyltransferase family. Suvar3-9 subfamily.

The protein resides in the nucleus. Its subcellular location is the chromosome. It carries out the reaction L-lysyl(4)-[histone H3] + 3 S-adenosyl-L-methionine = N(6),N(6),N(6)-trimethyl-L-lysyl(4)-[histone H3] + 3 S-adenosyl-L-homocysteine + 3 H(+). In terms of biological role, histone methyltransferase that specifically trimethylates 'Lys-9' of histone H3. H3 'Lys-9' trimethylation represents a specific tag for epigenetic transcriptional repression by recruiting HP1 (CBX1, CBX3 and/or CBX5) proteins to methylated histones. Mainly functions in euchromatin regions, thereby playing a central role in the silencing of euchromatic genes. H3 'Lys-9' trimethylation is coordinated with DNA methylation. Plays a role in promoter hypermethylation and transcriptional silencing of tumor suppressor genes (TSGs) or other tumor-related genes. Also required to maintain a transcriptionally repressive state of genes in undifferentiated embryonic stem cells (ESCs). Associates at promoter regions of tumor suppressor genes (TSGs) leading to their gene silencing. This chain is Histone-lysine N-methyltransferase SETDB1-B (setdb1b), found in Danio rerio (Zebrafish).